The sequence spans 351 residues: Dihydroorotate dehydrogenase (quinone) (351 aa).

Residues 67–71 and threonine 91 each bind FMN; that span reads AGFDK. Substrate is bound at residue lysine 71. 116 to 120 lines the substrate pocket; that stretch reads NAMGF. Residues asparagine 145 and asparagine 178 each coordinate FMN. Residue asparagine 178 coordinates substrate. Serine 181 (nucleophile) is an active-site residue. Residue asparagine 183 participates in substrate binding. Positions 214 and 242 each coordinate FMN. 243–244 contacts substrate; sequence NT. FMN-binding positions include glycine 262, glycine 291, and 312–313; that span reads YS.

This sequence belongs to the dihydroorotate dehydrogenase family. Type 2 subfamily. In terms of assembly, monomer. FMN is required as a cofactor.

Its subcellular location is the cell membrane. The catalysed reaction is (S)-dihydroorotate + a quinone = orotate + a quinol. It functions in the pathway pyrimidine metabolism; UMP biosynthesis via de novo pathway; orotate from (S)-dihydroorotate (quinone route): step 1/1. In terms of biological role, catalyzes the conversion of dihydroorotate to orotate with quinone as electron acceptor. The chain is Dihydroorotate dehydrogenase (quinone) from Helicobacter pylori (strain G27).